We begin with the raw amino-acid sequence, 190 residues long: Peptidyl-tRNA hydrolase (190 aa).

Y14 provides a ligand contact to tRNA. H19 (proton acceptor) is an active-site residue. Y64, N66, and N112 together coordinate tRNA.

Belongs to the PTH family. Monomer.

It localises to the cytoplasm. It carries out the reaction an N-acyl-L-alpha-aminoacyl-tRNA + H2O = an N-acyl-L-amino acid + a tRNA + H(+). Its function is as follows. Hydrolyzes ribosome-free peptidyl-tRNAs (with 1 or more amino acids incorporated), which drop off the ribosome during protein synthesis, or as a result of ribosome stalling. Catalyzes the release of premature peptidyl moieties from peptidyl-tRNA molecules trapped in stalled 50S ribosomal subunits, and thus maintains levels of free tRNAs and 50S ribosomes. The protein is Peptidyl-tRNA hydrolase of Chlorobium phaeovibrioides (strain DSM 265 / 1930) (Prosthecochloris vibrioformis (strain DSM 265)).